The chain runs to 253 residues: Redox-sensing transcriptional repressor Rex (253 aa).

The H-T-H motif DNA-binding region spans 26-65 (LYLRALTALSERSVPTVSSEELATAAGVNSAKLRKDFSYL). An NAD(+)-binding site is contributed by 100-105 (GIGNLG). The interval 217 to 253 (RKAGEDSAAEDEGAPPMRATPASRKGPDGDMPAVMPA) is disordered.

This sequence belongs to the transcriptional regulatory Rex family. In terms of assembly, homodimer.

The protein resides in the cytoplasm. Modulates transcription in response to changes in cellular NADH/NAD(+) redox state. This chain is Redox-sensing transcriptional repressor Rex, found in Streptomyces griseus subsp. griseus (strain JCM 4626 / CBS 651.72 / NBRC 13350 / KCC S-0626 / ISP 5235).